A 76-amino-acid polypeptide reads, in one-letter code: Omega-scoloptoxin(13)-Ssm2a (76 aa).

The N-terminal stretch at 1–22 (MAYIYALIFAIVVCMNTDVIQA) is a signal peptide.

Contains 4 disulfide bonds. Expressed by the venom gland.

Its subcellular location is the secreted. Its function is as follows. Inhibits voltage-gated calcium channel (Cav) currents in DRG neurons (IC(50)=1590 nM). This is Omega-scoloptoxin(13)-Ssm2a from Scolopendra mutilans (Chinese red-headed centipede).